The chain runs to 130 residues: Small ribosomal subunit protein uS8 (130 aa).

This sequence belongs to the universal ribosomal protein uS8 family. In terms of assembly, part of the 30S ribosomal subunit. Contacts proteins S5 and S12.

Its function is as follows. One of the primary rRNA binding proteins, it binds directly to 16S rRNA central domain where it helps coordinate assembly of the platform of the 30S subunit. The sequence is that of Small ribosomal subunit protein uS8 from Pseudoalteromonas translucida (strain TAC 125).